Reading from the N-terminus, the 340-residue chain is GPALPP motifs-containing protein 1 (340 aa).

The interval 1–304 (MARDLIGPAL…PQERIPFDRD (304 aa)) is disordered. A2 carries the N-acetylalanine modification. The short motif at 7–12 (GPALPP) is the GPALPP motif 1 element. At S28 the chain carries Phosphoserine. The GPALPP motif 2 motif lies at 32–37 (GPALPP). The segment covering 60–69 (GNQESEEDDS) has biased composition (acidic residues). A GPALPP motif 3 motif is present at residues 92–97 (GPALPP). S105 carries the post-translational modification Phosphoserine. Pro residues predominate over residues 107 to 116 (PRPIIGPALP). A GPALPP motif 4 motif is present at residues 112-117 (GPALPP). Positions 124–133 (QKSDKGRDDP) are enriched in basic and acidic residues. T138 is subject to Phosphothreonine. Phosphoserine occurs at positions 140 and 141. Composition is skewed to basic and acidic residues over residues 163–187 (EFEK…KPIV), 227–261 (PADR…KRLA), 269–279 (ESKRSESLMDI), and 287–304 (KAAE…FDRD). K271 is covalently cross-linked (Glycyl lysine isopeptide (Lys-Gly) (interchain with G-Cter in SUMO2)). K308 is covalently cross-linked (Glycyl lysine isopeptide (Lys-Gly) (interchain with G-Cter in SUMO2)).

In Homo sapiens (Human), this protein is GPALPP motifs-containing protein 1 (GPALPP1).